A 465-amino-acid chain; its full sequence is Phosphatidylserine synthase 1 (465 aa).

Residues 1–35 (MVSAMRSRTLSKDDVNYKMHFRMINEQQVEDITID) lie on the Cytoplasmic side of the membrane. A helical membrane pass occupies residues 36–56 (FFYKPHTITLLTFTTVSLMYF). The Lumenal portion of the chain corresponds to 57–68 (AFTRENTSQEDN). A helical transmembrane segment spans residues 69–89 (IWKGILSVIFFFLIISVLAFP). The Cytoplasmic segment spans residues 90 to 102 (NGPFTRPHPAIWR). The helical transmembrane segment at 103–123 (MVFGLSVLYFLFLVFLLFLNV) threads the bilayer. Residues 124-186 (EQVKAVMYWL…AMKALLIRSY (63 aa)) lie on the Lumenal side of the membrane. A helical membrane pass occupies residues 187–207 (GLCWTISITWEMTELFFMHLL). Over 208 to 216 (PNFAECWWD) the chain is Cytoplasmic. Residues 217–237 (QVILDILLCNGGGILLGMVVC) form a helical membrane-spanning segment. At 238–286 (RFLEMRTYHWASFKDIHTTTGKIKRAVLQFTPASWIYVRWFDPKSSFQR) the chain is on the lumenal side. A helical membrane pass occupies residues 287–307 (VAGVYLFMIIWQLTELNTFFL). Residues 308–319 (KHIFVFQASHPL) are Cytoplasmic-facing. The helical transmembrane segment at 320–342 (SWCRILFIGIITAPTVRQYYAYL) threads the bilayer. At 343–355 (TDTQCKRVGTQCW) the chain is on the lumenal side. The chain crosses the membrane as a helical span at residues 356–376 (VFGAIAFLEATVCIKFGQDLF). Topologically, residues 377–383 (SKTHLLY) are cytoplasmic. A helical transmembrane segment spans residues 384 to 404 (VFLWLFSVAVITFLCLYGMVW). Residues 405 to 465 (YADYCGQREK…GKVTNGVGKK (61 aa)) lie on the Lumenal side of the membrane. A disordered region spans residues 440-465 (PVKQNEGTSRRKNRHKGKVTNGVGKK). Positions 449 to 465 (RRKNRHKGKVTNGVGKK) are enriched in basic residues.

This sequence belongs to the phosphatidyl serine synthase family.

It is found in the endoplasmic reticulum membrane. The enzyme catalyses a 1,2-diacyl-sn-glycero-3-phosphoethanolamine + L-serine = a 1,2-diacyl-sn-glycero-3-phospho-L-serine + ethanolamine. It carries out the reaction a 1,2-diacyl-sn-glycero-3-phosphocholine + L-serine = a 1,2-diacyl-sn-glycero-3-phospho-L-serine + choline. It functions in the pathway phospholipid metabolism; phosphatidylserine biosynthesis. Functionally, catalyzes a base-exchange reaction in which the polar head group of phosphatidylethanolamine (PE) or phosphatidylcholine (PC) is replaced by L-serine. Catalyzes mainly the conversion of phosphatidylcholine but also converts, in vitro and to a lesser extent, phosphatidylethanolamine. This Xenopus tropicalis (Western clawed frog) protein is Phosphatidylserine synthase 1 (ptdss1).